Reading from the N-terminus, the 197-residue chain is Peptidyl-tRNA hydrolase (197 aa).

Tyr-23 serves as a coordination point for tRNA. Residue His-28 is the Proton acceptor of the active site. Residues Phe-73, Asn-75, and Asn-121 each coordinate tRNA.

It belongs to the PTH family. In terms of assembly, monomer.

The protein localises to the cytoplasm. The catalysed reaction is an N-acyl-L-alpha-aminoacyl-tRNA + H2O = an N-acyl-L-amino acid + a tRNA + H(+). Its function is as follows. Hydrolyzes ribosome-free peptidyl-tRNAs (with 1 or more amino acids incorporated), which drop off the ribosome during protein synthesis, or as a result of ribosome stalling. In terms of biological role, catalyzes the release of premature peptidyl moieties from peptidyl-tRNA molecules trapped in stalled 50S ribosomal subunits, and thus maintains levels of free tRNAs and 50S ribosomes. The polypeptide is Peptidyl-tRNA hydrolase (Frankia alni (strain DSM 45986 / CECT 9034 / ACN14a)).